Reading from the N-terminus, the 222-residue chain is MWFKSAGSALPDPHDALPGRATPLQVTETHFVHGRRIRPPFPSGTARAFFGMGCFWGAERRFWTLPGVYSTAVGYAGGSTPNPTYDEVCTGRTGHAEVVLVVYEPDKVGFDALLQVFWTSHDPTQGMRQGNDVGTQYRSVIFATTPEQLQWALVSRDAYERALERAGRGGITTEIRMAPDFYYAESYHQQYLAQHPNGYCGLRGTGVECPPFRIEQSRADPI.

Cys-54 is a catalytic residue.

The protein belongs to the MsrA Met sulfoxide reductase family.

It carries out the reaction L-methionyl-[protein] + [thioredoxin]-disulfide + H2O = L-methionyl-(S)-S-oxide-[protein] + [thioredoxin]-dithiol. The catalysed reaction is [thioredoxin]-disulfide + L-methionine + H2O = L-methionine (S)-S-oxide + [thioredoxin]-dithiol. In terms of biological role, has an important function as a repair enzyme for proteins that have been inactivated by oxidation. Catalyzes the reversible oxidation-reduction of methionine sulfoxide in proteins to methionine. The polypeptide is Peptide methionine sulfoxide reductase MsrA (Methylococcus capsulatus (strain ATCC 33009 / NCIMB 11132 / Bath)).